The primary structure comprises 266 residues: Tryptophan synthase alpha chain (266 aa).

Catalysis depends on proton acceptor residues Glu-49 and Asp-60.

This sequence belongs to the TrpA family. In terms of assembly, tetramer of two alpha and two beta chains.

The catalysed reaction is (1S,2R)-1-C-(indol-3-yl)glycerol 3-phosphate + L-serine = D-glyceraldehyde 3-phosphate + L-tryptophan + H2O. It functions in the pathway amino-acid biosynthesis; L-tryptophan biosynthesis; L-tryptophan from chorismate: step 5/5. Its function is as follows. The alpha subunit is responsible for the aldol cleavage of indoleglycerol phosphate to indole and glyceraldehyde 3-phosphate. This chain is Tryptophan synthase alpha chain, found in Shewanella amazonensis (strain ATCC BAA-1098 / SB2B).